Consider the following 232-residue polypeptide: Large ribosomal subunit protein uL1 (232 aa).

Belongs to the universal ribosomal protein uL1 family. In terms of assembly, part of the 50S ribosomal subunit.

Functionally, binds directly to 23S rRNA. The L1 stalk is quite mobile in the ribosome, and is involved in E site tRNA release. In terms of biological role, protein L1 is also a translational repressor protein, it controls the translation of the L11 operon by binding to its mRNA. The sequence is that of Large ribosomal subunit protein uL1 from Chlamydia caviae (strain ATCC VR-813 / DSM 19441 / 03DC25 / GPIC) (Chlamydophila caviae).